We begin with the raw amino-acid sequence, 183 residues long: Adenine phosphoribosyltransferase (183 aa).

Belongs to the purine/pyrimidine phosphoribosyltransferase family. In terms of assembly, homodimer.

Its subcellular location is the cytoplasm. The enzyme catalyses AMP + diphosphate = 5-phospho-alpha-D-ribose 1-diphosphate + adenine. The protein operates within purine metabolism; AMP biosynthesis via salvage pathway; AMP from adenine: step 1/1. Catalyzes a salvage reaction resulting in the formation of AMP, that is energically less costly than de novo synthesis. The protein is Adenine phosphoribosyltransferase of Salmonella heidelberg (strain SL476).